We begin with the raw amino-acid sequence, 303 residues long: MRLKKEDSILKIFIREDFPYFVDKFLNDTLPAAAYYSKDGELCQIHVSKHFFENEEPEYFIPDRLPARKYVFTFGKESTTPKICVDSHKDFNSIMLSGFEFNEMMIIERADGGEIEYYDRYRIREDFLSEWVENGWFTDFGRSIVESVYFKKKLYFYVSSESYDFSSIEEFEEVFSKYLERMDYKVVKSARKGKFSVVDATKNGKKEKFLLVKPDYEDDSDSISKEELESVTKRIRKNLRIIMDYEDDLSEDAMKWAREQGIEVKTIDEFMKEFMLREWEENDRIAAEDPEFWEDVIRDIFGG.

This is an uncharacterized protein from Archaeoglobus fulgidus (strain ATCC 49558 / DSM 4304 / JCM 9628 / NBRC 100126 / VC-16).